The following is a 241-amino-acid chain: DNA repair protein RecO (241 aa).

It belongs to the RecO family.

In terms of biological role, involved in DNA repair and RecF pathway recombination. This chain is DNA repair protein RecO, found in Azobacteroides pseudotrichonymphae genomovar. CFP2.